Reading from the N-terminus, the 125-residue chain is UPF0102 protein PBPRA3228 (125 aa).

This sequence belongs to the UPF0102 family.

This is UPF0102 protein PBPRA3228 from Photobacterium profundum (strain SS9).